Here is a 303-residue protein sequence, read N- to C-terminus: Probable phytol kinase, chloroplastic (303 aa).

Residues 1–49 (MAAAAAWTGAASPNSLLLSRSPPHAAALAPSPGSSMRRRLLLGVGTPAV) constitute a chloroplast transit peptide. 6 helical membrane-spanning segments follow: residues 98–118 (VVHV…SNST), 122–144 (YFAA…RLYT), 168–188 (YVLV…IGIV), 227–247 (FISG…LGYI), 254–274 (ALGK…VPVT), and 276–296 (VVDD…LLFS).

It belongs to the polyprenol kinase family.

The protein localises to the plastid. It localises to the chloroplast membrane. The enzyme catalyses phytol + CTP = phytyl phosphate + CDP + H(+). It functions in the pathway cofactor biosynthesis; tocopherol biosynthesis. Functionally, involved in the activation and reutilization of phytol from chlorophyll degradation in plant metabolism, including tocopherol biosynthesis. Catalyzes the conversion of phytol to phytol monophosphate (PMP). This chain is Probable phytol kinase, chloroplastic, found in Zea mays (Maize).